Consider the following 57-residue polypeptide: DNA-directed RNA polymerase subunit Rpo6 (57 aa).

It belongs to the archaeal Rpo6/eukaryotic RPB6 RNA polymerase subunit family. As to quaternary structure, part of the RNA polymerase complex.

Its subcellular location is the cytoplasm. It carries out the reaction RNA(n) + a ribonucleoside 5'-triphosphate = RNA(n+1) + diphosphate. Functionally, DNA-dependent RNA polymerase (RNAP) catalyzes the transcription of DNA into RNA using the four ribonucleoside triphosphates as substrates. In Thermococcus gammatolerans (strain DSM 15229 / JCM 11827 / EJ3), this protein is DNA-directed RNA polymerase subunit Rpo6.